A 132-amino-acid polypeptide reads, in one-letter code: Large ribosomal subunit protein bL12 (132 aa).

The protein belongs to the bacterial ribosomal protein bL12 family. Homodimer. Part of the ribosomal stalk of the 50S ribosomal subunit. Forms a multimeric L10(L12)X complex, where L10 forms an elongated spine to which 2 to 4 L12 dimers bind in a sequential fashion. Binds GTP-bound translation factors.

In terms of biological role, forms part of the ribosomal stalk which helps the ribosome interact with GTP-bound translation factors. Is thus essential for accurate translation. The chain is Large ribosomal subunit protein bL12 from Ehrlichia canis (strain Jake).